Reading from the N-terminus, the 877-residue chain is DNA polymerase I (877 aa).

Residues 180–272 (TPSQFIDLKA…GLEDTLLKEK (93 aa)) enclose the 5'-3' exonuclease domain. The 157-residue stretch at 312–468 (FEIVTDKSSV…AKEKMMAELI (157 aa)) folds into the 3'-5' exonuclease domain.

Belongs to the DNA polymerase type-A family. Single-chain monomer with multiple functions.

The catalysed reaction is DNA(n) + a 2'-deoxyribonucleoside 5'-triphosphate = DNA(n+1) + diphosphate. Its function is as follows. In addition to polymerase activity, this DNA polymerase exhibits 3'-5' and 5'-3' exonuclease activity. This chain is DNA polymerase I (polA), found in Lactococcus lactis subsp. cremoris (strain MG1363).